Reading from the N-terminus, the 334-residue chain is Ketol-acid reductoisomerase (NADP(+)) (334 aa).

The 181-residue stretch at 3 to 183 folds into the KARI N-terminal Rossmann domain; it reads ATIYYENDAD…GGTRGGVIET (181 aa). Residues 26 to 29, R49, S52, and 84 to 87 each bind NADP(+); these read YGSQ and DEVQ. The active site involves H109. G135 provides a ligand contact to NADP(+). The region spanning 184-329 is the KARI C-terminal knotted domain; it reads TFAEETETDL…LGLRRMMNWI (146 aa). Residues D192, E196, E228, and E232 each coordinate Mg(2+). S253 serves as a coordination point for substrate.

It belongs to the ketol-acid reductoisomerase family. The cofactor is Mg(2+).

It catalyses the reaction (2R)-2,3-dihydroxy-3-methylbutanoate + NADP(+) = (2S)-2-acetolactate + NADPH + H(+). The catalysed reaction is (2R,3R)-2,3-dihydroxy-3-methylpentanoate + NADP(+) = (S)-2-ethyl-2-hydroxy-3-oxobutanoate + NADPH + H(+). The protein operates within amino-acid biosynthesis; L-isoleucine biosynthesis; L-isoleucine from 2-oxobutanoate: step 2/4. It functions in the pathway amino-acid biosynthesis; L-valine biosynthesis; L-valine from pyruvate: step 2/4. Functionally, involved in the biosynthesis of branched-chain amino acids (BCAA). Catalyzes an alkyl-migration followed by a ketol-acid reduction of (S)-2-acetolactate (S2AL) to yield (R)-2,3-dihydroxy-isovalerate. In the isomerase reaction, S2AL is rearranged via a Mg-dependent methyl migration to produce 3-hydroxy-3-methyl-2-ketobutyrate (HMKB). In the reductase reaction, this 2-ketoacid undergoes a metal-dependent reduction by NADPH to yield (R)-2,3-dihydroxy-isovalerate. This Rhodopirellula baltica (strain DSM 10527 / NCIMB 13988 / SH1) protein is Ketol-acid reductoisomerase (NADP(+)).